The chain runs to 246 residues: DNA polymerase sliding clamp (246 aa).

This sequence belongs to the PCNA family. In terms of assembly, homotrimer. The subunits circularize to form a toroid; DNA passes through its center. Replication factor C (RFC) is required to load the toroid on the DNA.

Its function is as follows. Sliding clamp subunit that acts as a moving platform for DNA processing. Responsible for tethering the catalytic subunit of DNA polymerase and other proteins to DNA during high-speed replication. The protein is DNA polymerase sliding clamp of Thermoplasma volcanium (strain ATCC 51530 / DSM 4299 / JCM 9571 / NBRC 15438 / GSS1).